Consider the following 177-residue polypeptide: RNA pyrophosphohydrolase (177 aa).

In terms of domain architecture, Nudix hydrolase spans 6 to 149 (GYRPNVGIVI…KRDVYRRVMK (144 aa)). The Nudix box motif lies at 38 to 59 (GGINPGESPEQAMYRELFEEVG).

Belongs to the Nudix hydrolase family. RppH subfamily. A divalent metal cation serves as cofactor.

Functionally, accelerates the degradation of transcripts by removing pyrophosphate from the 5'-end of triphosphorylated RNA, leading to a more labile monophosphorylated state that can stimulate subsequent ribonuclease cleavage. The polypeptide is RNA pyrophosphohydrolase (Pectobacterium atrosepticum (strain SCRI 1043 / ATCC BAA-672) (Erwinia carotovora subsp. atroseptica)).